The primary structure comprises 355 residues: UDP-N-acetylglucosamine--N-acetylmuramyl-(pentapeptide) pyrophosphoryl-undecaprenol N-acetylglucosamine transferase (355 aa).

UDP-N-acetyl-alpha-D-glucosamine is bound by residues 11–13, R164, S194, and Q289; that span reads TAG.

It belongs to the glycosyltransferase 28 family. MurG subfamily.

The protein resides in the cell membrane. The enzyme catalyses di-trans,octa-cis-undecaprenyl diphospho-N-acetyl-alpha-D-muramoyl-L-alanyl-D-glutamyl-meso-2,6-diaminopimeloyl-D-alanyl-D-alanine + UDP-N-acetyl-alpha-D-glucosamine = di-trans,octa-cis-undecaprenyl diphospho-[N-acetyl-alpha-D-glucosaminyl-(1-&gt;4)]-N-acetyl-alpha-D-muramoyl-L-alanyl-D-glutamyl-meso-2,6-diaminopimeloyl-D-alanyl-D-alanine + UDP + H(+). It participates in cell wall biogenesis; peptidoglycan biosynthesis. Its function is as follows. Cell wall formation. Catalyzes the transfer of a GlcNAc subunit on undecaprenyl-pyrophosphoryl-MurNAc-pentapeptide (lipid intermediate I) to form undecaprenyl-pyrophosphoryl-MurNAc-(pentapeptide)GlcNAc (lipid intermediate II). This chain is UDP-N-acetylglucosamine--N-acetylmuramyl-(pentapeptide) pyrophosphoryl-undecaprenol N-acetylglucosamine transferase, found in Lachnoclostridium phytofermentans (strain ATCC 700394 / DSM 18823 / ISDg) (Clostridium phytofermentans).